A 389-amino-acid polypeptide reads, in one-letter code: Mannitol-1-phosphate 5-dehydrogenase (389 aa).

Residue 7 to 18 (AVHFGGGNIGRG) participates in NAD(+) binding. Residue Lys-216 is part of the active site.

This sequence belongs to the mannitol dehydrogenase family. As to quaternary structure, monomer.

The catalysed reaction is D-mannitol 1-phosphate + NAD(+) = beta-D-fructose 6-phosphate + NADH + H(+). Its function is as follows. Catalyzes the NAD(H)-dependent interconversion of D-fructose 6-phosphate and D-mannitol 1-phosphate in the mannitol metabolic pathway. This Pyrenophora tritici-repentis (strain Pt-1C-BFP) (Wheat tan spot fungus) protein is Mannitol-1-phosphate 5-dehydrogenase.